Reading from the N-terminus, the 414-residue chain is Putative competence-damage inducible protein (414 aa).

The protein belongs to the CinA family.

This is Putative competence-damage inducible protein from Listeria monocytogenes serotype 4b (strain CLIP80459).